Here is a 183-residue protein sequence, read N- to C-terminus: Photosystem I assembly protein Ycf4 (183 aa).

2 consecutive transmembrane segments (helical) span residues 21–43 (YIWG…SSYL) and 63–85 (LVMC…LILW).

Belongs to the Ycf4 family.

It localises to the plastid. The protein resides in the chloroplast thylakoid membrane. Its function is as follows. Seems to be required for the assembly of the photosystem I complex. This chain is Photosystem I assembly protein Ycf4, found in Chlorella vulgaris (Green alga).